The following is a 505-amino-acid chain: AMP phosphorylase (505 aa).

Residues G170, 196–201 (SRAITS), and T205 each bind AMP. Residue D258 is the Proton donor of the active site. Positions 266 and 290 each coordinate AMP.

Belongs to the thymidine/pyrimidine-nucleoside phosphorylase family. Type 2 subfamily.

It catalyses the reaction AMP + phosphate = alpha-D-ribose 1,5-bisphosphate + adenine. The catalysed reaction is CMP + phosphate = cytosine + alpha-D-ribose 1,5-bisphosphate. The enzyme catalyses UMP + phosphate = alpha-D-ribose 1,5-bisphosphate + uracil. Its function is as follows. Catalyzes the conversion of AMP and phosphate to adenine and ribose 1,5-bisphosphate (R15P). Exhibits phosphorylase activity toward CMP and UMP in addition to AMP. Functions in an archaeal AMP degradation pathway, together with R15P isomerase and RubisCO. The polypeptide is AMP phosphorylase (Methanococcus vannielii (strain ATCC 35089 / DSM 1224 / JCM 13029 / OCM 148 / SB)).